Here is a 664-residue protein sequence, read N- to C-terminus: Cyclic nucleotide-gated channel alpha-2 (664 aa).

Residues 1–10 show a composition bias toward polar residues; the sequence is MMTEKSNGVK. The segment at 1–51 is disordered; sequence MMTEKSNGVKSSPANNHNHHPPPSIKANGKDDHRAGSRPQSVAADDDTSPE. Over 1-146 the chain is Cytoplasmic; it reads MMTEKSNGVK…PAGDWYYRWL (146 aa). Residues 147-168 form a helical membrane-spanning segment; that stretch reads FVIAMPVLYNWCLLVARACFSD. The Extracellular segment spans residues 169–178; it reads LQRNYFVVWL. A helical transmembrane segment spans residues 179-199; sequence VLDYFSDTVYIADLIIRLRTG. Residues 200–224 are Cytoplasmic-facing; the sequence is FLEQGLLVKDPKKLRDNYIHTLQFK. A helical membrane pass occupies residues 225-243; the sequence is LDVASIIPTDLIYFAVGIH. Topologically, residues 244-248 are extracellular; the sequence is SPEVR. The chain crosses the membrane as a helical span at residues 249–267; sequence FNRLLHFARMFEFFDRTET. Residues 268–274 lie on the Cytoplasmic side of the membrane; the sequence is RTSYPNI. The interval 272-380 is ion conduction pathway; sequence PNIFRISNLV…GNVGSMISNM (109 aa). A helical membrane pass occupies residues 275 to 298; that stretch reads FRISNLVLYILVIIHWNACIYYVI. The Extracellular portion of the chain corresponds to 299–321; the sequence is SKSIGFGVDTWVYPNITDPEYGY. 2 helical membrane passes run 322 to 356 and 357 to 381; these read LAREYIYCLYWSTLTLTTIGETPPPVKDEEYLFVI and FDFLIGVLIFATIVGNVGSMISNMN. The tract at residues 339 to 342 is selectivity filter; sequence TIGE. A C-linker region spans residues 382–458; sequence ATRAEFQAKI…STLKKVRIFQ (77 aa). Residues 382 to 664 lie on the Cytoplasmic side of the membrane; sequence ATRAEFQAKI…INTPEPTAAE (283 aa). Residues 462–582 form a cyclic nucleotide-binding domain region; sequence AGLLVELVLK…EERGREILMK (121 aa). 3',5'-cyclic GMP contacts are provided by glycine 522, serine 525, arginine 538, and threonine 539. Arginine 538 and threonine 539 together coordinate 3',5'-cyclic AMP. Residues 599 to 653 are a coiled coil; it reads VQEKLEQLETNMDTLYTRFARLLAEYTGAQQKLKQRITVLETKMKQNHEDDYLSD.

The protein belongs to the cyclic nucleotide-gated cation channel (TC 1.A.1.5) family. CNGA2 subfamily. The olfactory cyclic nucleotide-gated channel is an heterotetramer composed of CNGA2, CNGA4 and CNGB1b subunits with 2:1:1 stoichiometry. In terms of tissue distribution, olfactory neurons. Widely expressed in brain, enriched in deep cerebellar nuclei, olfactory bulb mitral cells and cerebellar Purkinje neurons. Expressed in olfactory sensory cilia (at protein level).

The protein localises to the cell projection. It localises to the cilium membrane. The catalysed reaction is Ca(2+)(in) = Ca(2+)(out). It carries out the reaction Na(+)(in) = Na(+)(out). The enzyme catalyses K(+)(in) = K(+)(out). It catalyses the reaction NH4(+)(in) = NH4(+)(out). The catalysed reaction is Rb(+)(in) = Rb(+)(out). It carries out the reaction Li(+)(in) = Li(+)(out). The enzyme catalyses Cs(+)(in) = Cs(+)(out). With respect to regulation, the channel activity is inhibited by L-cis diltiazem. Pore-forming subunit of the olfactory cyclic nucleotide-gated channel. Operates in the cilia of olfactory sensory neurons where chemical stimulation of the odorant is converted to an electrical signal. Mediates odorant-induced cAMP-dependent Ca(2+) influx triggering neuron depolarization. The rise of intracellular Ca(2+) levels potentiates the olfactory response by activating Ca(2+)-dependent Cl(-) channels, but it also serves as a negative feedback signal to desensitize the channel for rapid adaptation to odorants. Conducts cAMP- and cGMP-gated ion currents, with permeability for monovalent and divalent cations. This chain is Cyclic nucleotide-gated channel alpha-2, found in Rattus norvegicus (Rat).